The chain runs to 203 residues: Cutinase pbc1 (203 aa).

The N-terminal stretch at 1–18 (MKVTALGNTLTGFGQALA) is a signal peptide. Cys-32 and Cys-107 form a disulfide bridge. Catalysis depends on Ser-118, which acts as the Nucleophile. Cys-166 and Cys-173 form a disulfide bridge. Residue His-170 is part of the active site. His-183 acts as the Proton donor/acceptor in catalysis.

This sequence belongs to the cutinase family. In terms of processing, the 2 disulfide bonds play a critical role in holding the catalytic residues in juxta-position; reduction of the disulfide bridges results in the complete inactivation of the enzyme.

Its subcellular location is the secreted. It carries out the reaction cutin + H2O = cutin monomers.. Its function is as follows. Catalyzes the hydrolysis of complex carboxylic polyesters found in the cell wall of plants. Degrades cutin, a macromolecule that forms the structure of the plant cuticle. Allows pathogenic fungi to penetrate through the cuticular barrier into the host plant during the initial stage of fungal infection. The sequence is that of Cutinase pbc1 from Pyrenopeziza brassicae.